The chain runs to 335 residues: Spliceosome-associated protein 49 (335 aa).

RRM domains lie at 13–84 (IYLG…PIRV) and 101–172 (LFVG…PITV). Residues 204-223 (VTPQSTLPPGFSPATPAPTS) form a disordered region.

Belongs to the SF3B4 family.

It is found in the nucleus. The chain is Spliceosome-associated protein 49 (sap49) from Schizosaccharomyces pombe (strain 972 / ATCC 24843) (Fission yeast).